The chain runs to 124 residues: Fluoride-specific ion channel FluC (124 aa).

Transmembrane regions (helical) follow at residues 6-26 (FAVA…ATWV), 34-54 (FYLA…YLYA), 69-89 (ALII…LDAL), and 101-121 (FAYV…GLAL). The Na(+) site is built by G76 and T79.

It belongs to the fluoride channel Fluc/FEX (TC 1.A.43) family.

The protein resides in the cell inner membrane. The catalysed reaction is fluoride(in) = fluoride(out). Its activity is regulated as follows. Na(+) is not transported, but it plays an essential structural role and its presence is essential for fluoride channel function. Its function is as follows. Fluoride-specific ion channel. Important for reducing fluoride concentration in the cell, thus reducing its toxicity. This is Fluoride-specific ion channel FluC from Stutzerimonas stutzeri (strain A1501) (Pseudomonas stutzeri).